The following is a 602-amino-acid chain: Oligoendopeptidase F, chromosomal (602 aa).

His-388 is a binding site for Zn(2+). Glu-389 is an active-site residue. Positions 392 and 395 each coordinate Zn(2+).

The protein belongs to the peptidase M3B family. Zn(2+) is required as a cofactor.

Its function is as follows. Hydrolyzes peptides containing between 7 and 17 amino acids with a rather wide specificity. The protein is Oligoendopeptidase F, chromosomal (pepF2) of Lactococcus lactis subsp. cremoris (Streptococcus cremoris).